Reading from the N-terminus, the 522-residue chain is MQNTDTTKYIIHSKINADGVIERPDIVGAIFGQTEGLLGADLDLRDLQKTGRIGRIEVMVTAKGGKTKGNIFVPSSLDKVETSILAASLETIDRVGPCSAKIEVFQVEDVRAVKRKKIIERAKLIFTKMFDETVPESQELADEVRQSVRVDELTYYGKSRIPCGPNVLNSDAIIILEGRADILNLLRYGIKNTICVGGTNIPPEVAELTKKKTVTAFTDGDRGGELIIRELLQVADIDYVARAPDGKCVEDLVQKEIIRALRRKVPVEQIIEKYGIQERENEDSACRLERVSKRKIRAPEIVPRIAEKKLHKRVKVHRVSPKADIHEEEFPEEMEETGPERAPEKIFEKVTERIPERPAEKTSAAAERVEARTSVAKPAVMARAVPATRVTRGKAAAEKGPAVKVPGGEAVRVSPAPARQAPAPVSPEAIRFRPHVDALKGTLTARILDSDDKVIEEIAVRDLASRLKNYRDNVKSVVFDGVITQRLVDIASSNEIKNLIGVKIGNIAKVPADMEVLTSSML.

The Toprim domain maps to 171–257; the sequence is DAIIILEGRA…CVEDLVQKEI (87 aa). 3 residues coordinate Mg(2+): Glu177, Asp219, and Asp221.

It belongs to the archaeal DnaG primase family. As to quaternary structure, forms a ternary complex with MCM helicase and DNA. Component of the archaeal exosome complex. It depends on Mg(2+) as a cofactor.

The catalysed reaction is ssDNA + n NTP = ssDNA/pppN(pN)n-1 hybrid + (n-1) diphosphate.. In terms of biological role, RNA polymerase that catalyzes the synthesis of short RNA molecules used as primers for DNA polymerase during DNA replication. Also part of the exosome, which is a complex involved in RNA degradation. Acts as a poly(A)-binding protein that enhances the interaction between heteromeric, adenine-rich transcripts and the exosome. The polypeptide is DNA primase DnaG (Methanosarcina mazei (strain ATCC BAA-159 / DSM 3647 / Goe1 / Go1 / JCM 11833 / OCM 88) (Methanosarcina frisia)).